Here is a 138-residue protein sequence, read N- to C-terminus: Large ribosomal subunit protein uL16 (138 aa).

This sequence belongs to the universal ribosomal protein uL16 family. As to quaternary structure, part of the 50S ribosomal subunit.

Binds 23S rRNA and is also seen to make contacts with the A and possibly P site tRNAs. This chain is Large ribosomal subunit protein uL16, found in Hyphomonas neptunium (strain ATCC 15444).